Reading from the N-terminus, the 121-residue chain is Large ribosomal subunit protein bL20 (121 aa).

This sequence belongs to the bacterial ribosomal protein bL20 family.

Binds directly to 23S ribosomal RNA and is necessary for the in vitro assembly process of the 50S ribosomal subunit. It is not involved in the protein synthesizing functions of that subunit. In Ruegeria pomeroyi (strain ATCC 700808 / DSM 15171 / DSS-3) (Silicibacter pomeroyi), this protein is Large ribosomal subunit protein bL20.